Consider the following 375-residue polypeptide: Chaperone protein DnaJ (375 aa).

The J domain occupies 4–69; it reads DLYETLGVQK…QKRAAYDRYG (66 aa). The CR-type zinc-finger motif lies at 133-211; the sequence is GKTAQIRVPT…CHGQGRVVEE (79 aa). The Zn(2+) site is built by Cys-146, Cys-149, Cys-163, Cys-166, Cys-185, Cys-188, Cys-199, and Cys-202. 4 CXXCXGXG motif repeats span residues 146-153, 163-170, 185-192, and 199-206; these read CDVCTGTG, CGTCQGTG, CPTCGGRG, and CTKCHGQG.

Belongs to the DnaJ family. Homodimer. Zn(2+) serves as cofactor.

The protein localises to the cytoplasm. In terms of biological role, participates actively in the response to hyperosmotic and heat shock by preventing the aggregation of stress-denatured proteins and by disaggregating proteins, also in an autonomous, DnaK-independent fashion. Unfolded proteins bind initially to DnaJ; upon interaction with the DnaJ-bound protein, DnaK hydrolyzes its bound ATP, resulting in the formation of a stable complex. GrpE releases ADP from DnaK; ATP binding to DnaK triggers the release of the substrate protein, thus completing the reaction cycle. Several rounds of ATP-dependent interactions between DnaJ, DnaK and GrpE are required for fully efficient folding. Also involved, together with DnaK and GrpE, in the DNA replication of plasmids through activation of initiation proteins. The protein is Chaperone protein DnaJ of Sinorhizobium medicae (strain WSM419) (Ensifer medicae).